The sequence spans 298 residues: Inosose dehydratase (298 aa).

Belongs to the IolE/MocC family. Requires glutathione as cofactor. Co(2+) serves as cofactor. It depends on Mn(2+) as a cofactor.

The enzyme catalyses scyllo-inosose = 3D-3,5/4-trihydroxycyclohexane-1,2-dione + H2O. It functions in the pathway polyol metabolism; myo-inositol degradation into acetyl-CoA; acetyl-CoA from myo-inositol: step 2/7. Catalyzes the dehydration of inosose (2-keto-myo-inositol, 2KMI or 2,4,6/3,5-pentahydroxycyclohexanone) to 3D-(3,5/4)-trihydroxycyclohexane-1,2-dione (D-2,3-diketo-4-deoxy-epi-inositol). This Lacticaseibacillus casei (Lactobacillus casei) protein is Inosose dehydratase.